Consider the following 199-residue polypeptide: Large ribosomal subunit protein bL25 (199 aa).

This sequence belongs to the bacterial ribosomal protein bL25 family. CTC subfamily. In terms of assembly, part of the 50S ribosomal subunit; part of the 5S rRNA/L5/L18/L25 subcomplex. Contacts the 5S rRNA. Binds to the 5S rRNA independently of L5 and L18.

Its function is as follows. This is one of the proteins that binds to the 5S RNA in the ribosome where it forms part of the central protuberance. The chain is Large ribosomal subunit protein bL25 from Syntrophobacter fumaroxidans (strain DSM 10017 / MPOB).